We begin with the raw amino-acid sequence, 174 residues long: Large ribosomal subunit protein uL16 (174 aa).

Belongs to the universal ribosomal protein uL16 family.

The polypeptide is Large ribosomal subunit protein uL16 (Methanocaldococcus jannaschii (strain ATCC 43067 / DSM 2661 / JAL-1 / JCM 10045 / NBRC 100440) (Methanococcus jannaschii)).